The chain runs to 458 residues: ATP synthase subunit beta (458 aa).

148-155 provides a ligand contact to ATP; it reads GGAGVGKT.

This sequence belongs to the ATPase alpha/beta chains family. As to quaternary structure, F-type ATPases have 2 components, CF(1) - the catalytic core - and CF(0) - the membrane proton channel. CF(1) has five subunits: alpha(3), beta(3), gamma(1), delta(1), epsilon(1). CF(0) has three main subunits: a(1), b(2) and c(9-12). The alpha and beta chains form an alternating ring which encloses part of the gamma chain. CF(1) is attached to CF(0) by a central stalk formed by the gamma and epsilon chains, while a peripheral stalk is formed by the delta and b chains.

The protein localises to the cell inner membrane. It carries out the reaction ATP + H2O + 4 H(+)(in) = ADP + phosphate + 5 H(+)(out). Its function is as follows. Produces ATP from ADP in the presence of a proton gradient across the membrane. The catalytic sites are hosted primarily by the beta subunits. The protein is ATP synthase subunit beta of Actinobacillus succinogenes (strain ATCC 55618 / DSM 22257 / CCUG 43843 / 130Z).